Here is a 116-residue protein sequence, read N- to C-terminus: Large ribosomal subunit protein bL17 (116 aa).

It belongs to the bacterial ribosomal protein bL17 family. As to quaternary structure, part of the 50S ribosomal subunit. Contacts protein L32.

The sequence is that of Large ribosomal subunit protein bL17 from Sulfurovum sp. (strain NBC37-1).